Here is a 399-residue protein sequence, read N- to C-terminus: Tryptophan synthase beta chain (399 aa).

Position 92 is an N6-(pyridoxal phosphate)lysine (K92).

It belongs to the TrpB family. As to quaternary structure, tetramer of two alpha and two beta chains. It depends on pyridoxal 5'-phosphate as a cofactor.

The enzyme catalyses (1S,2R)-1-C-(indol-3-yl)glycerol 3-phosphate + L-serine = D-glyceraldehyde 3-phosphate + L-tryptophan + H2O. It participates in amino-acid biosynthesis; L-tryptophan biosynthesis; L-tryptophan from chorismate: step 5/5. The beta subunit is responsible for the synthesis of L-tryptophan from indole and L-serine. The sequence is that of Tryptophan synthase beta chain from Bordetella bronchiseptica (strain ATCC BAA-588 / NCTC 13252 / RB50) (Alcaligenes bronchisepticus).